The following is a 190-amino-acid chain: High affinity copper uptake protein 1 (190 aa).

A disordered region spans residues 1 to 35 (MDHSHHMGMSYMDSNSTMQPSHHHPTTSASHSHGG). Topologically, residues 1 to 61 (MDHSHHMGMS…KNVELLFSGL (61 aa)) are extracellular. The short motif at 5-6 (HH) is the Bis-His motif element. The short motif at 7 to 12 (MGMSYM) is the Methionine segments (Mets) motif element. N-linked (GlcNAc...) asparagine glycosylation is present at Asn15. Over residues 26 to 35 (TTSASHSHGG) the composition is skewed to low complexity. A glycan (O-linked (GalNAc...) threonine) is linked at Thr27. Residues 62–82 (VINTAGEMAGAFVAVFLLAMF) traverse the membrane as a helical segment. Topologically, residues 83–132 (YEGLKIARESLLRKSQVSIRYNSMPVPGPNGTILMETHKTVGQQMLSFPH) are cytoplasmic. Phosphothreonine is present on Thr114. The helical transmembrane segment at 133–153 (LLQTVLHIIQVVISYFLMLIF) threads the bilayer. At 154-156 (MTY) the chain is on the extracellular side. The helical transmembrane segment at 157 to 177 (NGYLCIAVAAGAGTGYFLFSW) threads the bilayer. The Cytoplasmic segment spans residues 178–190 (KKAVVVDITEHCH). Cys189 carries the post-translational modification Cysteine sulfenic acid (-SOH).

This sequence belongs to the copper transporter (Ctr) (TC 1.A.56) family. SLC31A subfamily. As to quaternary structure, homotrimer; is stabilized by cisplatin via interactions between cisplatin and the methionine-rich clusters, and could be crucial for the copper(2+) reduction process and copper(1+) stabilization. Heterotrimer between SLC31A1, CCS and SOD1; this heterotrimer is copper(1+)-mediated and its maintenance is regulated through SOD1 activation. Interacts with KDR; this interaction is induced upon VEGFA stimulation leading to SLC31A1 and KDR subsequent co-internalization to early endosomes, thereby activating KDR downstream signaling in endothelial cells. Interacts (via C-terminal domain) with ATOX1 (via dimer form); this interaction improves ATOX1 stability and controls intracellular copper(1+) levels. Interacts with SLC31A2; this interaction stabilizes SLC31A2 and protects its from ubiquitination and degradation. Interacts (via C-terminal domain) with CCS; this interaction is copper(1+)-mediated. O-Glycosylation at Thr-27 protects from proteolytic cleavage in the N-terminal extracellular domain. Post-translationally, proteolytic cleavage, leading to a truncated form, is facilitated by SLC31A2 and initiated preferentially by CTSL and to a minor extend by CTSB in endolysosomal compartments. In vitro, is cleaved by CTSL/cathepsin L between residues 8 and 9 from the amino terminus. A post-CTSL/cathepsin L processing occurs to yield to the fully truncated form. In terms of processing, sulfenylated at Cys-189 after stimulation with VEGFA, which induces SLC31A1-KDR disulfide bond formation and their co-internalization to early endosomes, driving to a sustained VEGFR2 signaling.

The protein resides in the cell membrane. Its subcellular location is the early endosome membrane. The protein localises to the recycling endosome membrane. It is found in the apical cell membrane. It localises to the late endosome membrane. The protein resides in the basolateral cell membrane. It catalyses the reaction Ag(+)(out) = Ag(+)(in). The enzyme catalyses Cu(+)(out) = Cu(+)(in). Its activity is regulated as follows. Copper(1+) transport is stimulated by extracellular acidic pH and high potassium ions concentrations. Copper(1+) import is regulated by a copper(1+)-dependent recycling of SLC31A1. In terms of biological role, uniporter that mediates the transport of copper(1+) from the extracellular space to the cytoplasm, across the plasma membrane and delivers directly copper(1+) to specific chaperone such as ATOX1, via a copper(1+)- mediated transient interaction between the C-terminal domain and a copper(1+) chaperone, thus controlling intracellular copper(1+) levels. May function in copper(1+) import from the apical membrane thus may drive intestinal copper absorption. The copper(1+) transport mechanism is sodium-independent, saturable and of high-affinity. Also mediates the uptake of silver(1+). May function in the influx of the platinum-containing chemotherapeutic agents. The platinum-containing chemotherapeutic agents uptake is saturable. In vitro, mediates the transport of cadmium(2+) into cells. Also participates in the first step of copper(2+) acquisition by cells through a direct transfer of copper(2+) from copper(2+) carriers in blood, such as ALB to the N-terminal domain of SLC31A1, leading to copper(2+) reduction and probably followed by copper(1+) stabilization. In addition, functions as a redox sensor to promote angiogenesis in endothelial cells, in a copper(1+) transport independent manner, by transmitting the VEGF-induced ROS signal through a sulfenylation at Cys-189 leadin g to a subsequent disulfide bond formation between SLC31A1 and KDR. The SLC31A1-KDR complex is then co-internalized to early endosomes, driving a sustained VEGFR2 signaling. Mobilizes copper(1+) out of the endosomal compartment, making copper(1+) available for export out of the cells. This Homo sapiens (Human) protein is High affinity copper uptake protein 1.